Consider the following 475-residue polypeptide: Ribulose bisphosphate carboxylase large chain (475 aa).

Residues 1-2 (MS) constitute a propeptide that is removed on maturation. Pro-3 is subject to N-acetylproline. Lys-14 carries the post-translational modification N6,N6,N6-trimethyllysine. The substrate site is built by Asn-123 and Thr-173. Lys-175 serves as the catalytic Proton acceptor. Lys-177 contributes to the substrate binding site. Lys-201, Asp-203, and Glu-204 together coordinate Mg(2+). Residue Lys-201 is modified to N6-carboxylysine. His-294 functions as the Proton acceptor in the catalytic mechanism. Substrate-binding residues include Arg-295, His-327, and Ser-379.

It belongs to the RuBisCO large chain family. Type I subfamily. As to quaternary structure, heterohexadecamer of 8 large chains and 8 small chains; disulfide-linked. The disulfide link is formed within the large subunit homodimers. Requires Mg(2+) as cofactor. In terms of processing, the disulfide bond which can form in the large chain dimeric partners within the hexadecamer appears to be associated with oxidative stress and protein turnover.

It localises to the plastid. The protein resides in the chloroplast. It carries out the reaction 2 (2R)-3-phosphoglycerate + 2 H(+) = D-ribulose 1,5-bisphosphate + CO2 + H2O. The catalysed reaction is D-ribulose 1,5-bisphosphate + O2 = 2-phosphoglycolate + (2R)-3-phosphoglycerate + 2 H(+). Its function is as follows. RuBisCO catalyzes two reactions: the carboxylation of D-ribulose 1,5-bisphosphate, the primary event in carbon dioxide fixation, as well as the oxidative fragmentation of the pentose substrate in the photorespiration process. Both reactions occur simultaneously and in competition at the same active site. The polypeptide is Ribulose bisphosphate carboxylase large chain (Picea sitchensis (Sitka spruce)).